The primary structure comprises 346 residues: Histone H1.8 (346 aa).

Composition is skewed to low complexity over residues 1–23 (MAPG…SSRS) and 38–48 (PGGPSHSSLPV). 2 disordered regions span residues 1–50 (MAPG…PVGR) and 121–346 (ATGS…RAEA). An H15 domain is found at 51 to 129 (RHPPVLRMVL…GATGSFKLVP (79 aa)). Over residues 128–137 (VPKHKKKIQP) the composition is skewed to basic residues. The span at 148–167 (RAGEAKGKGPKKPSEAKEDP) shows a compositional bias: basic and acidic residues. Residues 164 to 179 (KEDPPNVGKVKKAAKR) carry the Nuclear localization signal motif. Positions 172-182 (KVKKAAKRPAK) are enriched in basic residues. Composition is skewed to basic and acidic residues over residues 205-225 (KDTR…DKAM) and 251-262 (EAYRKTKAESKS). A compositionally biased stretch (basic residues) spans 278 to 288 (TKKKVVAKAKA). Residues 298-309 (KAAAPAKGSGSK) show a composition bias toward low complexity. Over residues 334 to 346 (ASSSKVSSQRAEA) the composition is skewed to polar residues.

Belongs to the histone H1/H5 family. Oocyte-specific.

It localises to the cytoplasm. Its subcellular location is the nucleus. The protein localises to the chromosome. In terms of biological role, may play a key role in the control of gene expression during oogenesis and early embryogenesis, presumably through the perturbation of chromatin structure. Essential for meiotic maturation of germinal vesicle-stage oocytes. The somatic type linker histone H1c is rapidly replaced by H1oo in a donor nucleus transplanted into an oocyte. The greater mobility of H1oo as compared to H1c may contribute to this rapid replacement and increased instability of the embryonic chromatin structure. The rapid replacement of H1c with H1oo may play an important role in nuclear remodeling. In Homo sapiens (Human), this protein is Histone H1.8.